Here is a 271-residue protein sequence, read N- to C-terminus: Extracellular metalloprotease TRV_06892 (271 aa).

The N-terminal stretch at 1–19 (MRFSVLLTGLAAAGSIATA) is a signal peptide. Asn136 is a glycosylation site (N-linked (GlcNAc...) asparagine). His185 is a binding site for Zn(2+). The active site involves Glu186. His189 contributes to the Zn(2+) binding site. N-linked (GlcNAc...) asparagine glycosylation is present at Asn200. An intrachain disulfide couples Cys222 to Cys248.

This sequence belongs to the peptidase M43B family.

Its subcellular location is the secreted. Secreted metalloproteinase that allows assimilation of proteinaceous substrates. Plays a pivotal role as a pathogenicity determinant during infections and contributes to the ability of the pathogen to persist within the mammalian host. The chain is Extracellular metalloprotease TRV_06892 from Trichophyton verrucosum (strain HKI 0517).